The chain runs to 541 residues: Glucose-6-phosphate isomerase (541 aa).

The active-site Proton donor is Glu-346. Active-site residues include His-377 and Lys-506.

The protein belongs to the GPI family.

Its subcellular location is the cytoplasm. The enzyme catalyses alpha-D-glucose 6-phosphate = beta-D-fructose 6-phosphate. It participates in carbohydrate biosynthesis; gluconeogenesis. Its pathway is carbohydrate degradation; glycolysis; D-glyceraldehyde 3-phosphate and glycerone phosphate from D-glucose: step 2/4. Catalyzes the reversible isomerization of glucose-6-phosphate to fructose-6-phosphate. This is Glucose-6-phosphate isomerase from Rhizobium leguminosarum bv. trifolii (strain WSM2304).